The following is a 481-amino-acid chain: GDP-fucose protein O-fucosyltransferase 2 (481 aa).

Positions 1 to 22 (MKGRAHIWVALLLACLPPRFRN) are cleaved as a signal peptide. Residues 59-63 (GEGFN), 287-289 (HLR), Asp365, and 382-383 (RF) contribute to the GDP-beta-L-fucose site. The active-site Proton acceptor is Glu60.

The protein belongs to the glycosyltransferase 68 family.

Its subcellular location is the endoplasmic reticulum. The catalysed reaction is L-seryl-[protein] + GDP-beta-L-fucose = 3-O-(alpha-L-fucosyl)-L-seryl-[protein] + GDP + H(+). It catalyses the reaction L-threonyl-[protein] + GDP-beta-L-fucose = 3-O-(alpha-L-fucosyl)-L-threonyl-[protein] + GDP + H(+). It functions in the pathway protein modification; protein glycosylation. Its function is as follows. Catalyzes the reaction that attaches fucose through an O-glycosidic linkage to a conserved serine or threonine residue in the consensus sequence C1-X-X-S/T-C2 of thrombospondin type I repeats (TSRs) where C1 and C2 are the first and second cysteines of the repeat, respectively. O-fucosylates sporozoite proteins CSP and TRAP. O-fucosylation regulates stability and intracellular trafficking of TRAP but not of CSP. Probably by regulating protein O-fucosylation, may play a role in parasite transmission to the mosquito vector and/or infection of the vertebrate host hepatocytes; however, POFUT2 involvement in transmission/infection is controversial. This chain is GDP-fucose protein O-fucosyltransferase 2, found in Plasmodium vivax (strain Salvador I).